Consider the following 262-residue polypeptide: Small ribosomal subunit protein eS1 (262 aa).

Residues 1–18 (MAVGKNKRISKGKKGSKK) are compositionally biased toward basic residues. A disordered region spans residues 1–20 (MAVGKNKRISKGKKGSKKKT).

It belongs to the eukaryotic ribosomal protein eS1 family. In terms of assembly, component of the small ribosomal subunit. Mature ribosomes consist of a small (40S) and a large (60S) subunit. The 40S subunit contains about 33 different proteins and 1 molecule of RNA (18S). The 60S subunit contains about 49 different proteins and 3 molecules of RNA (25S, 5.8S and 5S).

It is found in the cytoplasm. In Oryza sativa subsp. japonica (Rice), this protein is Small ribosomal subunit protein eS1.